Reading from the N-terminus, the 509-residue chain is Maturase K (509 aa).

Belongs to the intron maturase 2 family. MatK subfamily.

The protein localises to the plastid. It localises to the chloroplast. In terms of biological role, usually encoded in the trnK tRNA gene intron. Probably assists in splicing its own and other chloroplast group II introns. This is Maturase K from Austrocylindropuntia vestita (Cactus).